A 230-amino-acid chain; its full sequence is CDP-diacylglycerol--inositol 3-phosphatidyltransferase (230 aa).

Topologically, residues 1-28 (MPSAKSSDLSPTKTNLESTTKQKVSVQD) are cytoplasmic. A helical membrane pass occupies residues 29-51 (IFLYIPNLIGYLRIITAIISFLC). The Lumenal portion of the chain corresponds to 52-57 (MANHPV). The helical transmembrane segment at 58–77 (ATLIFYGISGFLDAFDGYAA) threads the bilayer. Residues aspartate 70 and aspartate 73 each contribute to the Mg(2+) site. The a CDP-1,2-diacyl-sn-glycerol site is built by glycine 74, arginine 78, and threonine 84. Residues 78–89 (RKFNQGTRFGAV) are Cytoplasmic-facing. A helical transmembrane segment spans residues 90–110 (LDMVTDRCATSSLIVYLGVLY). Mg(2+)-binding residues include aspartate 91 and aspartate 95. The active-site Proton acceptor is aspartate 95. Topologically, residues 111–112 (PQ) are lumenal. The chain crosses the membrane as a helical span at residues 113–133 (YTVFWQILVSLDLSSHYMHMY). Topologically, residues 134 to 161 (AMLSAGSTSHKNVDETQSKLLSLYYNNR) are cytoplasmic. A helical membrane pass occupies residues 162 to 182 (LVLFFVCLINELFYMAVYLHY). Residues 183–184 (YK) lie on the Lumenal side of the membrane. Residues 185–205 (FFWLGTVMLVASTPIWLFKQI) form a helical membrane-spanning segment. The Cytoplasmic segment spans residues 206–230 (ANIIQLKNASLILARMDAHDHSKRD).

Belongs to the CDP-alcohol phosphatidyltransferase class-I family. Mn(2+) is required as a cofactor. Mg(2+) serves as cofactor.

It is found in the endoplasmic reticulum membrane. The enzyme catalyses a CDP-1,2-diacyl-sn-glycerol + myo-inositol = a 1,2-diacyl-sn-glycero-3-phospho-(1D-myo-inositol) + CMP + H(+). Its activity is regulated as follows. Inhibited by calcium and zinc ions. Inhibited by nucleoside triphosphates and diphosphates. In terms of biological role, catalyzes the synthesis of phosphatidylinositol (PtdIns). Required for proper membrane dynamics and cell wall integrity. In Candida albicans (strain SC5314 / ATCC MYA-2876) (Yeast), this protein is CDP-diacylglycerol--inositol 3-phosphatidyltransferase.